Consider the following 321-residue polypeptide: Arabinan endo-1,5-alpha-L-arabinosidase A (321 aa).

The N-terminal stretch at 1 to 19 (MYQLLSVASVPLLASLVHG) is a signal peptide. The Proton acceptor role is filled by D34. The active-site Proton donor is the E200. N295 is a glycosylation site (N-linked (GlcNAc...) asparagine).

This sequence belongs to the glycosyl hydrolase 43 family.

The enzyme catalyses Endohydrolysis of (1-&gt;5)-alpha-arabinofuranosidic linkages in (1-&gt;5)-arabinans.. The protein operates within glycan metabolism; L-arabinan degradation. Functionally, its preferred substrate is linear 1,5-alpha-L-arabinan. The enzyme activity is progressively reduced as 1,5-alpha-chains become shorter or more highly substituted. This Aspergillus niger protein is Arabinan endo-1,5-alpha-L-arabinosidase A (abnA).